Here is a 189-residue protein sequence, read N- to C-terminus: Large ribosomal subunit protein uL5 (189 aa).

This sequence belongs to the universal ribosomal protein uL5 family. Part of the 50S ribosomal subunit; part of the 5S rRNA/L5/L18/L25 subcomplex. Contacts the 5S rRNA and the P site tRNA. Forms a bridge to the 30S subunit in the 70S ribosome.

This is one of the proteins that bind and probably mediate the attachment of the 5S RNA into the large ribosomal subunit, where it forms part of the central protuberance. In the 70S ribosome it contacts protein S13 of the 30S subunit (bridge B1b), connecting the 2 subunits; this bridge is implicated in subunit movement. Contacts the P site tRNA; the 5S rRNA and some of its associated proteins might help stabilize positioning of ribosome-bound tRNAs. The chain is Large ribosomal subunit protein uL5 from Parafrankia sp. (strain EAN1pec).